We begin with the raw amino-acid sequence, 219 residues long: Transmembrane emp24 domain-containing protein 10 (219 aa).

A signal peptide spans 1–31 (MSGLSGPLSWPGPLLSALLFLFLLGPSSVLG). Residues 1-142 (MSGLSGPLSW…KNYEEIAKVE (142 aa)) form a required for interaction with STX17 region. The Lumenal segment spans residues 32–185 (ISFHLPVNSR…RDTNESTNTR (154 aa)). One can recognise a GOLD domain in the interval 41 to 193 (RKCLREEIHK…TRVLYFSIFS (153 aa)). Residues 147–178 (LEVELRRLEDLSESIVNDFAYMKKREEEMRDT) are required for TMED10 and TMED2 cis-Golgi network localization. Dimethylated arginine is present on residues Arg171 and Arg176. A glycan (N-linked (GlcNAc...) asparagine) is linked at Asn179. The helical transmembrane segment at 186-206 (VLYFSIFSMFCLIGLATWQVF) threads the bilayer. An interaction with COPG1 region spans residues 204-219 (QVFYLRRFFKAKKLIE). The Cytoplasmic portion of the chain corresponds to 207-219 (YLRRFFKAKKLIE). Residues 207 to 219 (YLRRFFKAKKLIE) are interaction with ARF1 and IL1B. The COPII vesicle coat-binding motif lies at 211 to 212 (FF). The short motif at 211 to 219 (FFKAKKLIE) is the COPI vesicle coat-binding element.

This sequence belongs to the EMP24/GP25L family. In terms of assembly, predominantly dimeric and to a lesser extent monomeric in the ER. Monomer and dimer in ERGIC and cis-Golgi network. Forms homooligomer (via GOLD domain); the assembly is promoted by direct binding with leaderless cargos and may form a protein channel that facilitates cargo entry into the ERGIC. Forms heterooligomeric complexes with other members of the p24 family such as TMED2, TMED7 and TMED9. Interacts (via GOLD domain) with TMED2 (via GOLD domain); the complex is required for export of TMED10 from the ER to the cis-Golgi network; the complex is proposed to be involved in cis-Golgi network dynamics and / or biogenesis. Associates with the COPI vesicle coat subunits (coatomer). Tetramerization of the cytoplasmic domain at the Golgi membrane in vitro; the complex is proposed to interact with COPI coatomer and induce budding of the vesicles. Interacts with COPG1; the interaction involves TMED10 homodimer. Interacts with ARF1 (GDP-bound); the interaction probably involves a TMED10 oligomer. Interacts with SEC23A, SEC24B, SEC24C and SEC24D components of the coat protein complex II/COPII, indicative of an association of TMED10 with the COPII vesicle coat. Interacts with CD59. Interacts with MPPE1/PGAP5; the complex might recruit and sort GPI-anchored proteins to the ER-exit site, or the interaction might lead to recycling of PGAP5 between the ER and the Golgi. Interacts with F2LR1/PAR2. Interacts with KDELR2/ERD2; the interaction is disrupted by KDELR2 ligand. Found in a complex composed at least of SURF4, TMED2 and TMED10. Associates with the presenilin-dependent gamma-secretase complex. Interacts with STX17; the interaction is direct. Interacts with IL-1; the interaction is direct. Interacts with RAB21 (active GTP-bound form); the interaction is indirect and regulates TMED10 abundance and localization at the Golgi. As to expression, ubiquitous.

It is found in the endoplasmic reticulum membrane. Its subcellular location is the endoplasmic reticulum-Golgi intermediate compartment membrane. It localises to the golgi apparatus membrane. The protein localises to the golgi apparatus. The protein resides in the cis-Golgi network membrane. It is found in the trans-Golgi network membrane. Its subcellular location is the cytoplasmic vesicle. It localises to the secretory vesicle membrane. The protein localises to the cell membrane. The protein resides in the melanosome. Cargo receptor involved in protein vesicular trafficking and quality control in the endoplasmic reticulum (ER) and Golgi. The p24 protein family is a group of transmembrane proteins that bind coat protein complex I/COPI and coat protein complex II/COPII involved in vesicular trafficking between the membranes. Acts at the lumenal side for incorporation of secretory cargo molecules into transport vesicles and involved in vesicle coat formation at the cytoplasmic side. Mainly functions in the early secretory pathway and cycles between the ER, ER-Golgi intermediate compartment (ERGIC) and Golgi, mediating cargo transport through COPI and COPII-coated vesicles. In COPII vesicle-mediated anterograde transport, involved in the transport of GPI-anchored proteins by acting together with TMED2 as their cargo receptor; the function specifically implies SEC24C and SEC24D of the COPII vesicle coat and lipid raft-like microdomains of the ER. Recognizes GPI anchors structural remodeled in the ER by the GPI inositol-deacylase/PGAP1 and the metallophosphoesterase MPPE1/PGAP5. In COPI vesicle-mediated retrograde transport, involved in the biogenesis of COPI vesicles and vesicle coat recruitment. Involved in trafficking of amyloid beta A4 protein and soluble APP-beta release (independent from the modulation of gamma-secretase activity). Involved in the KDELR2-mediated retrograde transport of the toxin A subunit (CTX-A-K63)together with COPI and the COOH terminus of KDELR2. On Golgi membranes, acts as a primary receptor for ARF1-GDP, a GTP-binding protein involved in COPI-vesicle formation. Increases coatomer-dependent GTPase-activating activity of ARFGAP2 which mediates the hydrolysis of ARF1-bound GTP and therefore modulates protein trafficking from the Golgi apparatus. Involved in the exocytic trafficking of G protein-coupled receptors F2LR1/PAR2 (trypsin and tryspin-like enzyme receptor), OPRM1 (opioid receptor) and P2RY4 (UTD and UDP receptor) from the Golgi to the plasma membrane, thus contributing to receptor resensitization. In addition to its cargo receptor activity, may also act as a protein channel after oligomerization, facilitating the post-translational entry of leaderless cytoplasmic cargo into the ERGIC. Involved in the translocation into ERGIC, the vesicle entry and the secretion of leaderless cargos (lacking the secretion signal sequence), including the mature form of interleukin 1/IL-1 family members, the alpha-crystallin B chain HSPB5, the carbohydrate-binding proteins galectin-1/LGALS1 and galectin-3/LGALS3, the microtubule-associated protein Tau/MAPT, and the annexin A1/ANXA1; the translocation process is dependent on cargo protein unfolding and enhanced by chaperones HSP90AB1 and HSP90B1/GRP9. Could also associates with the presenilin-dependent gamma-secretase complex in order to regulate gamma-cleavages of the amyloid beta A4 protein to yield amyloid-beta 40/Abeta40. The chain is Transmembrane emp24 domain-containing protein 10 from Rattus norvegicus (Rat).